We begin with the raw amino-acid sequence, 274 residues long: Large ribosomal subunit protein uL2 (274 aa).

Disordered regions lie at residues 35-60 (EPQH…GHKH) and 224-274 (VMNP…RRKK). The segment covering 50-60 (TTRHKGGGHKH) has biased composition (basic residues). Residues 229–246 (DHPHGGGEGKTGEGRHAV) show a composition bias toward basic and acidic residues.

This sequence belongs to the universal ribosomal protein uL2 family. In terms of assembly, part of the 50S ribosomal subunit. Forms a bridge to the 30S subunit in the 70S ribosome.

In terms of biological role, one of the primary rRNA binding proteins. Required for association of the 30S and 50S subunits to form the 70S ribosome, for tRNA binding and peptide bond formation. It has been suggested to have peptidyltransferase activity; this is somewhat controversial. Makes several contacts with the 16S rRNA in the 70S ribosome. The chain is Large ribosomal subunit protein uL2 from Delftia acidovorans (strain DSM 14801 / SPH-1).